The chain runs to 192 residues: MVRYNAVEDPLCYPGTHVLRNRANIPDQNELDEFEQLMFDSRAREALPDGDLDFAHYRALHRHFFQDVYEWAGQTRIIRTGKGENWFCYPEYIEREANRLFAELAARDHLARTESKEAFAKGASWFLAEINAIHPFREGNGRTQLVFLTMLTRYAGYELDESKLEPKRFLDAMIRSFSGDLAPLAAEIRRMI.

The Fido domain maps to 52–190 (LDFAHYRALH…LAPLAAEIRR (139 aa)). ATP contacts are provided by residues 82–83 (KG) and 139–141 (GNG).

The protein belongs to the fic family.

It catalyses the reaction L-tyrosyl-[protein] + ATP = O-(5'-adenylyl)-L-tyrosyl-[protein] + diphosphate. It carries out the reaction L-threonyl-[protein] + ATP = 3-O-(5'-adenylyl)-L-threonyl-[protein] + diphosphate. In terms of biological role, probable adenylyltransferase that mediates the addition of adenosine 5'-monophosphate (AMP) to specific residues of target proteins. This chain is Probable protein adenylyltransferase y4lH, found in Sinorhizobium fredii (strain NBRC 101917 / NGR234).